The following is a 333-amino-acid chain: Beta-ketoacyl-[acyl-carrier-protein] synthase III (333 aa).

Residues Cys116 and His258 contribute to the active site. The segment at 259-263 (QANKR) is ACP-binding. The active site involves Asn288.

The protein belongs to the thiolase-like superfamily. FabH family. In terms of assembly, homodimer.

Its subcellular location is the cytoplasm. It carries out the reaction malonyl-[ACP] + acetyl-CoA + H(+) = 3-oxobutanoyl-[ACP] + CO2 + CoA. It participates in lipid metabolism; fatty acid biosynthesis. Functionally, catalyzes the condensation reaction of fatty acid synthesis by the addition to an acyl acceptor of two carbons from malonyl-ACP. Catalyzes the first condensation reaction which initiates fatty acid synthesis and may therefore play a role in governing the total rate of fatty acid production. Possesses both acetoacetyl-ACP synthase and acetyl transacylase activities. Its substrate specificity determines the biosynthesis of branched-chain and/or straight-chain of fatty acids. This is Beta-ketoacyl-[acyl-carrier-protein] synthase III from Koribacter versatilis (strain Ellin345).